Consider the following 98-residue polypeptide: NADH-ubiquinone oxidoreductase chain 4L (98 aa).

3 consecutive transmembrane segments (helical) span residues 1 to 21 (MSLV…GLLM), 29 to 49 (SLLC…LTIL), and 61 to 81 (IILL…LVMV).

It belongs to the complex I subunit 4L family. As to quaternary structure, core subunit of respiratory chain NADH dehydrogenase (Complex I) which is composed of 45 different subunits.

Its subcellular location is the mitochondrion inner membrane. The enzyme catalyses a ubiquinone + NADH + 5 H(+)(in) = a ubiquinol + NAD(+) + 4 H(+)(out). Its function is as follows. Core subunit of the mitochondrial membrane respiratory chain NADH dehydrogenase (Complex I) which catalyzes electron transfer from NADH through the respiratory chain, using ubiquinone as an electron acceptor. Part of the enzyme membrane arm which is embedded in the lipid bilayer and involved in proton translocation. This is NADH-ubiquinone oxidoreductase chain 4L (MT-ND4L) from Rangifer tarandus (Reindeer).